A 211-amino-acid chain; its full sequence is MRNIQIALTKGRLEKHVIPLFEQIGIDCSELKNKGRKLVFQSKNTDISFILVKAVDVATYVEHGVADIGVVGKDILMENEKDIYEMLDLGVGVCKFCVASIPTYNPKSYRKKCIATKYPHITSNYFHNKGEDVEIIKIEGSVEIAPILGLADAIVDIVETGKTLQENGLIVFEEMYSISARMIVNKAALKTKKDEIFSIINMMEQEILSGK.

It belongs to the ATP phosphoribosyltransferase family. Short subfamily. As to quaternary structure, heteromultimer composed of HisG and HisZ subunits.

It localises to the cytoplasm. It carries out the reaction 1-(5-phospho-beta-D-ribosyl)-ATP + diphosphate = 5-phospho-alpha-D-ribose 1-diphosphate + ATP. Its pathway is amino-acid biosynthesis; L-histidine biosynthesis; L-histidine from 5-phospho-alpha-D-ribose 1-diphosphate: step 1/9. In terms of biological role, catalyzes the condensation of ATP and 5-phosphoribose 1-diphosphate to form N'-(5'-phosphoribosyl)-ATP (PR-ATP). Has a crucial role in the pathway because the rate of histidine biosynthesis seems to be controlled primarily by regulation of HisG enzymatic activity. This Bacillus cereus (strain 03BB102) protein is ATP phosphoribosyltransferase.